Consider the following 131-residue polypeptide: MHCIRSSILQHLRLRVSVRPTSLLQNENGFKSIGIFNFTSEAAADGGQDQILSRVIELVKKYDKTNTSEVTERADFQKDLSLDSLDKTELVMAIEEEFSIEIPDEKADKLTCCGDVATYILSETPTKASES.

The N-terminal 39 residues, 1-39, are a transit peptide targeting the mitochondrion; that stretch reads MHCIRSSILQHLRLRVSVRPTSLLQNENGFKSIGIFNFT. The region spanning 49–124 is the Carrier domain; it reads DQILSRVIEL…DVATYILSET (76 aa). The residue at position 84 (Ser84) is an O-(pantetheine 4'-phosphoryl)serine.

This sequence belongs to the acyl carrier protein (ACP) family. As to quaternary structure, complex I is composed of at least 49 different subunits. Post-translationally, 4'-phosphopantetheine is transferred from CoA to a specific serine of the apo-ACP-like protein.

The protein localises to the mitochondrion. It functions in the pathway lipid metabolism; fatty acid biosynthesis. In terms of biological role, carrier of the growing fatty acid chain in fatty acid biosynthesis. May be involved in the synthesis of short and medium chain fatty acids. Accessory and non-catalytic subunit of the mitochondrial membrane respiratory chain NADH dehydrogenase (Complex I), which functions in the transfer of electrons from NADH to the respiratory chain. This Arabidopsis thaliana (Mouse-ear cress) protein is Acyl carrier protein 3, mitochondrial (MTACP2).